A 115-amino-acid polypeptide reads, in one-letter code: uncharacterized protein (115 aa).

Belongs to the herpesviridae BLRF2 family.

This is an uncharacterized protein from Saimiriine herpesvirus 2 (strain 11) (SaHV-2).